The chain runs to 477 residues: Myosin-binding protein H (477 aa).

Residues 1-73 (MMEKNTSEGP…APPSEDVPSA (73 aa)) are disordered. A phosphothreonine mark is found at threonine 6 and threonine 26. A Fibronectin type-III 1 domain is found at 73 to 168 (APLLLTLDDV…LDQPIHIREN (96 aa)). The 89-residue stretch at 172-260 (PKIRVPRHLR…EDLEAKAVID (89 aa)) folds into the Ig-like C2-type 1 domain. The region spanning 269-364 (PPSSIRLLDV…TKELAHIQKA (96 aa)) is the Fibronectin type-III 2 domain. The Ig-like C2-type 2 domain occupies 382–466 (PSFTQPLADH…INVLGEASVD (85 aa)).

This sequence belongs to the immunoglobulin superfamily. MyBP family. As to expression, mainly expressed in the skeletal muscle. Slightly expressed in the left atrium and arteria mammaria interna.

Binds to myosin; probably involved in interaction with thick myofilaments in the A-band. This chain is Myosin-binding protein H (MYBPH), found in Homo sapiens (Human).